Reading from the N-terminus, the 150-residue chain is Meiotic expression up-regulated protein 15 (150 aa).

In Schizosaccharomyces pombe (strain 972 / ATCC 24843) (Fission yeast), this protein is Meiotic expression up-regulated protein 15 (meu15).